A 192-amino-acid polypeptide reads, in one-letter code: MTVRLSSEHPRGRSAARRLRTRAAAYLAALGRADAEISILLVGDRRIRALNREWRGKDAATDVLSFPLSEPPGSGPLLGDVVISLDTAARRARQERRAVGAELDRYLAHGLLHLLGYDHERPADARRMARKEAELARAEGLVGAALREGGPARAAETETSWTRSPTSTSTRSPSGSTARGTRARSSRAGSGR.

3 residues coordinate Zn(2+): His109, His113, and His119. Residues 142-192 (VGAALREGGPARAAETETSWTRSPTSTSTRSPSGSTARGTRARSSRAGSGR) form a disordered region. Over residues 159–180 (TSWTRSPTSTSTRSPSGSTARG) the composition is skewed to low complexity.

It belongs to the endoribonuclease YbeY family. Zn(2+) serves as cofactor.

It is found in the cytoplasm. Its function is as follows. Single strand-specific metallo-endoribonuclease involved in late-stage 70S ribosome quality control and in maturation of the 3' terminus of the 16S rRNA. The sequence is that of Endoribonuclease YbeY from Anaeromyxobacter sp. (strain Fw109-5).